We begin with the raw amino-acid sequence, 164 residues long: MKEFLAVGEIINTHGIKGEVKVYPLTDDMKRFKKLKEVFIDGEEKKILSCKLQPNNVVLKIEGIDSIEEANKYRKKLLEIKRENSVKLPKGSYFIADLIECRVIDEDGREIGQISDVIKTGSNDVYEVKGKSEVLVPAIKDIVTNIDIENKTVTIKPLEIWQCE.

The PRC barrel domain maps to lysine 90 to tryptophan 161.

Belongs to the RimM family. As to quaternary structure, binds ribosomal protein uS19.

The protein resides in the cytoplasm. Its function is as follows. An accessory protein needed during the final step in the assembly of 30S ribosomal subunit, possibly for assembly of the head region. Essential for efficient processing of 16S rRNA. May be needed both before and after RbfA during the maturation of 16S rRNA. It has affinity for free ribosomal 30S subunits but not for 70S ribosomes. This is Ribosome maturation factor RimM from Clostridium botulinum (strain ATCC 19397 / Type A).